A 165-amino-acid chain; its full sequence is SsrA-binding protein (165 aa).

This sequence belongs to the SmpB family.

It is found in the cytoplasm. In terms of biological role, required for rescue of stalled ribosomes mediated by trans-translation. Binds to transfer-messenger RNA (tmRNA), required for stable association of tmRNA with ribosomes. tmRNA and SmpB together mimic tRNA shape, replacing the anticodon stem-loop with SmpB. tmRNA is encoded by the ssrA gene; the 2 termini fold to resemble tRNA(Ala) and it encodes a 'tag peptide', a short internal open reading frame. During trans-translation Ala-aminoacylated tmRNA acts like a tRNA, entering the A-site of stalled ribosomes, displacing the stalled mRNA. The ribosome then switches to translate the ORF on the tmRNA; the nascent peptide is terminated with the 'tag peptide' encoded by the tmRNA and targeted for degradation. The ribosome is freed to recommence translation, which seems to be the essential function of trans-translation. This is SsrA-binding protein from Prochlorococcus marinus (strain MIT 9515).